The chain runs to 81 residues: uncharacterized protein (81 aa).

This is an uncharacterized protein from Saccharomyces cerevisiae (strain ATCC 204508 / S288c) (Baker's yeast).